The following is a 206-amino-acid chain: A-type ATP synthase subunit D (206 aa).

This sequence belongs to the V-ATPase D subunit family. As to quaternary structure, has multiple subunits with at least A(3), B(3), C, D, E, F, H, I and proteolipid K(x).

The protein resides in the cell membrane. Its function is as follows. Component of the A-type ATP synthase that produces ATP from ADP in the presence of a proton gradient across the membrane. This Methanococcoides burtonii (strain DSM 6242 / NBRC 107633 / OCM 468 / ACE-M) protein is A-type ATP synthase subunit D.